Reading from the N-terminus, the 744-residue chain is ATP-dependent zinc metalloprotease FtsH (744 aa).

Over 1 to 16 (MQDQNNSNTPKKKKLS) the chain is Cytoplasmic. The chain crosses the membrane as a helical span at residues 17 to 37 (FWGIIGIVASILVLLVIAYII). The Extracellular segment spans residues 38-177 (YYYVSQTTVL…ESIWSTVLRY (140 aa)). A helical transmembrane segment spans residues 178–198 (GTNIIFLLLFAASFIFMFMSF). Over 199–744 (RSQRGTGGLL…EEKSKDEKNN (546 aa)) the chain is Cytoplasmic. 264–271 (GPPGTGKT) provides a ligand contact to ATP. His486 is a binding site for Zn(2+). Glu487 is an active-site residue. Zn(2+) contacts are provided by His490 and Asp564. The disordered stretch occupies residues 722 to 744 (IEANKSSSKSTVNEEKSKDEKNN). Residues 733–744 (VNEEKSKDEKNN) are compositionally biased toward basic and acidic residues.

It in the central section; belongs to the AAA ATPase family. This sequence in the C-terminal section; belongs to the peptidase M41 family. In terms of assembly, homohexamer. Zn(2+) serves as cofactor.

It is found in the cell membrane. Acts as a processive, ATP-dependent zinc metallopeptidase for both cytoplasmic and membrane proteins. Plays a role in the quality control of integral membrane proteins. The sequence is that of ATP-dependent zinc metalloprotease FtsH from Metamycoplasma arthritidis (strain 158L3-1) (Mycoplasma arthritidis).